A 148-amino-acid chain; its full sequence is MARSLGVPLLLLAALVVALALAVSPAAGARTRQSPRLLGGLEDVDAQEKDVQRALGFAESEYNKGSNDRYHSRALQVVRARRQIVSGVKYYLDVLIGRTTCTKTQTNLANCPFHDQPDLQRKMLCSFEIYSVPWLNKISLLKSDCQNA.

A signal peptide spans 1-28 (MARSLGVPLLLLAALVVALALAVSPAAG). The Secondary area of contact motif lies at 83-87 (QIVSG). 2 disulfides stabilise this stretch: Cys101–Cys111 and Cys125–Cys145.

This sequence belongs to the cystatin family.

It is found in the secreted. In terms of biological role, this is a thiol proteinase inhibitor. This Oryctolagus cuniculus (Rabbit) protein is Cystatin-C (CST3).